The sequence spans 458 residues: tRNA modification GTPase MnmE (458 aa).

(6S)-5-formyl-5,6,7,8-tetrahydrofolate-binding residues include R22, E84, and R123. The region spanning 220-379 (GIATAIIGRP…LETAIADLFF (160 aa)) is the TrmE-type G domain. N230 is a binding site for K(+). GTP is bound by residues 230–235 (NVGKSS), 249–255 (TDIAGTT), and 274–277 (DTAG). S234 is a Mg(2+) binding site. The K(+) site is built by T249, I251, and T254. A Mg(2+)-binding site is contributed by T255. Position 458 (K458) interacts with (6S)-5-formyl-5,6,7,8-tetrahydrofolate.

Belongs to the TRAFAC class TrmE-Era-EngA-EngB-Septin-like GTPase superfamily. TrmE GTPase family. In terms of assembly, homodimer. Heterotetramer of two MnmE and two MnmG subunits. K(+) serves as cofactor.

The protein resides in the cytoplasm. In terms of biological role, exhibits a very high intrinsic GTPase hydrolysis rate. Involved in the addition of a carboxymethylaminomethyl (cmnm) group at the wobble position (U34) of certain tRNAs, forming tRNA-cmnm(5)s(2)U34. The sequence is that of tRNA modification GTPase MnmE from Bacillus cereus (strain ATCC 10987 / NRS 248).